A 369-amino-acid chain; its full sequence is UDP-3-O-acylglucosamine N-acyltransferase (369 aa).

His-263 functions as the Proton acceptor in the catalytic mechanism.

This sequence belongs to the transferase hexapeptide repeat family. LpxD subfamily. Homotrimer.

It carries out the reaction a UDP-3-O-[(3R)-3-hydroxyacyl]-alpha-D-glucosamine + a (3R)-hydroxyacyl-[ACP] = a UDP-2-N,3-O-bis[(3R)-3-hydroxyacyl]-alpha-D-glucosamine + holo-[ACP] + H(+). Its pathway is bacterial outer membrane biogenesis; LPS lipid A biosynthesis. Functionally, catalyzes the N-acylation of UDP-3-O-acylglucosamine using 3-hydroxyacyl-ACP as the acyl donor. Is involved in the biosynthesis of lipid A, a phosphorylated glycolipid that anchors the lipopolysaccharide to the outer membrane of the cell. This Burkholderia ambifaria (strain MC40-6) protein is UDP-3-O-acylglucosamine N-acyltransferase.